Here is a 334-residue protein sequence, read N- to C-terminus: Large ribosomal subunit protein uL3 (334 aa).

Over residues 1–10 (MGMKKSRPRR) the composition is skewed to basic residues. Residues 1–20 (MGMKKSRPRRGSLAFSPRKR) form a disordered region.

It belongs to the universal ribosomal protein uL3 family. Part of the 50S ribosomal subunit. Forms a cluster with proteins L14 and L24e.

One of the primary rRNA binding proteins, it binds directly near the 3'-end of the 23S rRNA, where it nucleates assembly of the 50S subunit. The chain is Large ribosomal subunit protein uL3 from Methanococcus maripaludis (strain C7 / ATCC BAA-1331).